We begin with the raw amino-acid sequence, 344 residues long: Heat-inducible transcription repressor HrcA (344 aa).

It belongs to the HrcA family.

Negative regulator of class I heat shock genes (grpE-dnaK-dnaJ and groELS operons). Prevents heat-shock induction of these operons. This is Heat-inducible transcription repressor HrcA from Streptococcus equi subsp. zooepidemicus (strain H70).